Consider the following 178-residue polypeptide: ATP-dependent protease subunit HslV (178 aa).

Residue Thr7 is part of the active site. Residues Gly162, Cys165, and Thr168 each contribute to the Na(+) site.

The protein belongs to the peptidase T1B family. HslV subfamily. A double ring-shaped homohexamer of HslV is capped on each side by a ring-shaped HslU homohexamer. The assembly of the HslU/HslV complex is dependent on binding of ATP.

It is found in the cytoplasm. The catalysed reaction is ATP-dependent cleavage of peptide bonds with broad specificity.. Allosterically activated by HslU binding. Functionally, protease subunit of a proteasome-like degradation complex believed to be a general protein degrading machinery. This is ATP-dependent protease subunit HslV from Burkholderia ambifaria (strain ATCC BAA-244 / DSM 16087 / CCUG 44356 / LMG 19182 / AMMD) (Burkholderia cepacia (strain AMMD)).